Reading from the N-terminus, the 482-residue chain is C3a anaphylatoxin chemotactic receptor (482 aa).

Over 1 to 23 (MASFSAETNSTDLLSQPWNEPPV) the chain is Extracellular. N-linked (GlcNAc...) asparagine glycosylation is present at N9. The chain crosses the membrane as a helical span at residues 24–46 (ILSMVILSLTFLLGLPGNGLVLW). Topologically, residues 47–57 (VAGLKMQRTVN) are cytoplasmic. A helical transmembrane segment spans residues 58–80 (TVWFLHLTLADLLCCLSLPFSLA). Residues 81-96 (HLALQGQWPYGRFLCE) lie on the Extracellular side of the membrane. Cysteines 95 and 172 form a disulfide. The helical transmembrane segment at 97 to 118 (LIPSIIVLNMFASVFLLTAISL) threads the bilayer. Residues 119–139 (DRCLVVFKPIWCQNHRNVGTA) are Cytoplasmic-facing. A helical membrane pass occupies residues 140–160 (CSICGCIWVVAFVMCIPVFVY). The Extracellular portion of the chain corresponds to 161–340 (REIFTADNHN…TPLVAITITR (180 aa)). A sulfotyrosine mark is found at Y174 and Y184. A glycan (N-linked (GlcNAc...) asparagine) is linked at N194. Position 318 is a sulfotyrosine (Y318). Residues 341–360 (LVVGFLLPSVIMIACYSFIV) traverse the membrane as a helical segment. The Cytoplasmic segment spans residues 361–377 (FRMQRGRFAKSQSKTFR). A helical transmembrane segment spans residues 378 to 400 (VAVVVVAVFLVCWTPYHIFGVLS). Topologically, residues 401-417 (LLIDPESPLGKTLMSWD) are extracellular. Residues 418-438 (HVSIALASANSCFNPFLYALL) traverse the membrane as a helical segment. Residues 439–482 (GKDFRKKARQSIQGILEAAFSEELTRSTHCNSNNVFSERNSTTV) lie on the Cytoplasmic side of the membrane. S459 bears the Phosphoserine mark. T463 is subject to Phosphothreonine.

This sequence belongs to the G-protein coupled receptor 1 family. Interacts with VGF-derived peptide TLQP-21. Among the sulfation sites Tyr-174 is essential for binding of C3a anaphylatoxin.

Its subcellular location is the cell membrane. In terms of biological role, receptor for the chemotactic and inflammatory peptide anaphylatoxin C3a. This receptor stimulates chemotaxis, granule enzyme release and superoxide anion production. This is C3a anaphylatoxin chemotactic receptor (C3AR1) from Pongo abelii (Sumatran orangutan).